Here is a 61-residue protein sequence, read N- to C-terminus: Short neurotoxin 1 (61 aa).

Positions 1–16 are enriched in polar residues; it reads LECHNQQSSQPPTTKS. The disordered stretch occupies residues 1–20; sequence LECHNQQSSQPPTTKSCPGD. Disulfide bonds link cysteine 3-cysteine 23, cysteine 17-cysteine 40, cysteine 42-cysteine 53, and cysteine 54-cysteine 59.

This sequence belongs to the three-finger toxin family. Short-chain subfamily. Type I alpha-neurotoxin sub-subfamily. In terms of tissue distribution, expressed by the venom gland.

It is found in the secreted. Functionally, binds to muscle nicotinic acetylcholine receptor (nAChR) and inhibit acetylcholine from binding to the receptor, thereby impairing neuromuscular transmission. The polypeptide is Short neurotoxin 1 (Hemachatus haemachatus (Rinkhals)).